We begin with the raw amino-acid sequence, 259 residues long: uncharacterized protein (259 aa).

This is an uncharacterized protein from Aquifex aeolicus (strain VF5).